The sequence spans 95 residues: Co-chaperonin GroES (95 aa).

It belongs to the GroES chaperonin family. As to quaternary structure, heptamer of 7 subunits arranged in a ring. Interacts with the chaperonin GroEL.

The protein localises to the cytoplasm. Together with the chaperonin GroEL, plays an essential role in assisting protein folding. The GroEL-GroES system forms a nano-cage that allows encapsulation of the non-native substrate proteins and provides a physical environment optimized to promote and accelerate protein folding. GroES binds to the apical surface of the GroEL ring, thereby capping the opening of the GroEL channel. This chain is Co-chaperonin GroES, found in Aliivibrio salmonicida (strain LFI1238) (Vibrio salmonicida (strain LFI1238)).